A 271-amino-acid polypeptide reads, in one-letter code: Histone chaperone asf-1 (271 aa).

Positions 152-271 (KWDSEASAPP…PKQQGMAMAQ (120 aa)) are disordered. 2 stretches are compositionally biased toward acidic residues: residues 168–185 (PEADEVADEEEYGADELA) and 211–258 (IEED…EMEI).

It belongs to the ASF1 family. In terms of assembly, interacts with histone H3 and histone H4.

It localises to the nucleus. Functionally, histone chaperone that facilitates histone deposition and histone exchange and removal during nucleosome assembly and disassembly. The sequence is that of Histone chaperone asf-1 (asf-1) from Neurospora crassa (strain ATCC 24698 / 74-OR23-1A / CBS 708.71 / DSM 1257 / FGSC 987).